A 227-amino-acid polypeptide reads, in one-letter code: Cytochrome c oxidase subunit 2 (227 aa).

At Met-1–Ser-14 the chain is on the mitochondrial intermembrane side. Residues Pro-15–Met-45 traverse the membrane as a helical segment. Topologically, residues Leu-46–Gln-59 are mitochondrial matrix. The chain crosses the membrane as a helical span at residues Glu-60–Met-87. At Asp-88–Ile-227 the chain is on the mitochondrial intermembrane side. Cu cation-binding residues include His-161, Cys-196, Glu-198, Cys-200, His-204, and Met-207. A Mg(2+)-binding site is contributed by Glu-198.

It belongs to the cytochrome c oxidase subunit 2 family. Component of the cytochrome c oxidase (complex IV, CIV), a multisubunit enzyme composed of 14 subunits. The complex is composed of a catalytic core of 3 subunits MT-CO1, MT-CO2 and MT-CO3, encoded in the mitochondrial DNA, and 11 supernumerary subunits COX4I, COX5A, COX5B, COX6A, COX6B, COX6C, COX7A, COX7B, COX7C, COX8 and NDUFA4, which are encoded in the nuclear genome. The complex exists as a monomer or a dimer and forms supercomplexes (SCs) in the inner mitochondrial membrane with NADH-ubiquinone oxidoreductase (complex I, CI) and ubiquinol-cytochrome c oxidoreductase (cytochrome b-c1 complex, complex III, CIII), resulting in different assemblies (supercomplex SCI(1)III(2)IV(1) and megacomplex MCI(2)III(2)IV(2)). Found in a complex with TMEM177, COA6, COX18, COX20, SCO1 and SCO2. Interacts with TMEM177 in a COX20-dependent manner. Interacts with COX20. Interacts with COX16. Cu cation serves as cofactor.

It localises to the mitochondrion inner membrane. It carries out the reaction 4 Fe(II)-[cytochrome c] + O2 + 8 H(+)(in) = 4 Fe(III)-[cytochrome c] + 2 H2O + 4 H(+)(out). Functionally, component of the cytochrome c oxidase, the last enzyme in the mitochondrial electron transport chain which drives oxidative phosphorylation. The respiratory chain contains 3 multisubunit complexes succinate dehydrogenase (complex II, CII), ubiquinol-cytochrome c oxidoreductase (cytochrome b-c1 complex, complex III, CIII) and cytochrome c oxidase (complex IV, CIV), that cooperate to transfer electrons derived from NADH and succinate to molecular oxygen, creating an electrochemical gradient over the inner membrane that drives transmembrane transport and the ATP synthase. Cytochrome c oxidase is the component of the respiratory chain that catalyzes the reduction of oxygen to water. Electrons originating from reduced cytochrome c in the intermembrane space (IMS) are transferred via the dinuclear copper A center (CU(A)) of subunit 2 and heme A of subunit 1 to the active site in subunit 1, a binuclear center (BNC) formed by heme A3 and copper B (CU(B)). The BNC reduces molecular oxygen to 2 water molecules using 4 electrons from cytochrome c in the IMS and 4 protons from the mitochondrial matrix. In Praomys jacksoni (African forest rat), this protein is Cytochrome c oxidase subunit 2 (MT-CO2).